Consider the following 281-residue polypeptide: Sulfur carrier protein FdhD (281 aa).

Cys-117 acts as the Cysteine persulfide intermediate in catalysis.

This sequence belongs to the FdhD family.

It localises to the cytoplasm. In terms of biological role, required for formate dehydrogenase (FDH) activity. Acts as a sulfur carrier protein that transfers sulfur from IscS to the molybdenum cofactor prior to its insertion into FDH. This is Sulfur carrier protein FdhD from Xanthomonas oryzae pv. oryzae (strain MAFF 311018).